Consider the following 415-residue polypeptide: uncharacterized protein (415 aa).

[4Fe-4S] cluster contacts are provided by C66, C72, C75, and C149. S-adenosyl-L-methionine-binding residues include Q249, F276, E296, and D344. C370 acts as the Nucleophile in catalysis.

The protein belongs to the class I-like SAM-binding methyltransferase superfamily. RNA M5U methyltransferase family.

This is an uncharacterized protein from Brucella suis biovar 1 (strain 1330).